A 465-amino-acid polypeptide reads, in one-letter code: A-type ATP synthase subunit B (465 aa).

Belongs to the ATPase alpha/beta chains family. The A-type ATPase is composed of subunits A(3), B(3), C, D, E(1 or 2), F, H(2), I and proteolipid K(x).

Its subcellular location is the cell membrane. In terms of biological role, component of the A-type ATP synthase that produces ATP from ADP in the presence of a proton gradient across the membrane. The B chain is a regulatory subunit. This is A-type ATP synthase subunit B from Methanocaldococcus jannaschii (strain ATCC 43067 / DSM 2661 / JAL-1 / JCM 10045 / NBRC 100440) (Methanococcus jannaschii).